Consider the following 498-residue polypeptide: uncharacterized protein (498 aa).

The N-terminal stretch at 1 to 26 (MEESSMAQASLICLLLSFSIIMLSNA) is a signal peptide. Over 27–441 (ADISIDCGSS…GEEKSSSNLA (415 aa)) the chain is Extracellular. N-linked (GlcNAc...) asparagine glycosylation is found at N44, N150, N354, and N357. The tract at residues 351–439 (GSGNGTNSTS…KSGEEKSSSN (89 aa)) is disordered. The span at 362–414 (SGGGSPSPGGGSGSPPSTGGGSGSPPSTGGGGGSPSKGGGGGKSGGSNNGDGG) shows a compositional bias: gly residues. Residues 418–436 (ASEDEKSADSSGKSGEEKS) are compositionally biased toward basic and acidic residues. The chain crosses the membrane as a helical span at residues 442–462 (LPLGISLPTLLSLGAGGWGVW). At 463-498 (KYFIKPRRHPESELPLKQNISLQVNMGNATVVNAGQ) the chain is on the cytoplasmic side.

The protein resides in the membrane. This is an uncharacterized protein from Arabidopsis thaliana (Mouse-ear cress).